Reading from the N-terminus, the 122-residue chain is Large ribosomal subunit protein uL14 (122 aa).

The protein belongs to the universal ribosomal protein uL14 family. Part of the 50S ribosomal subunit. Forms a cluster with proteins L3 and L19. In the 70S ribosome, L14 and L19 interact and together make contacts with the 16S rRNA in bridges B5 and B8.

In terms of biological role, binds to 23S rRNA. Forms part of two intersubunit bridges in the 70S ribosome. This chain is Large ribosomal subunit protein uL14, found in Baumannia cicadellinicola subsp. Homalodisca coagulata.